The following is a 246-amino-acid chain: MDSRVYIIKFDNWGFMVNLMNKIQILRKISQTLFFVRALIVTGFYLSIVGFIKRFIIGDRILATIITKIIAIVLAFIAGRVFCGWMCPFGFLFNLVYELRVKLFKLKKLPTVDEKIHNKLIYFKYVVLILVVLAYLSGVKISGYTLAYLLLALFLVLGFIYPMFFCRYVCPVGSLLSIFARFSIFKLKLDENKCVGCRLCERKCPMQIKITEKIDQMECIRCFECMSVCKKGALSFSAFTKNTKKE.

Helical transmembrane passes span 32 to 52 (TLFFVRALIVTGFYLSIVGFI), 69 to 89 (IIAIVLAFIAGRVFCGWMCPF), 121 to 141 (IYFKYVVLILVVLAYLSGVKI), and 146 to 166 (LAYLLLALFLVLGFIYPMFFC). 4Fe-4S ferredoxin-type domains lie at 185-213 (FKLKLDENKCVGCRLCERKCPMQIKITEK) and 210-239 (ITEKIDQMECIRCFECMSVCKKGALSFSAF). [4Fe-4S] cluster contacts are provided by Cys-194, Cys-197, Cys-200, Cys-204, Cys-219, Cys-222, Cys-225, and Cys-229.

It localises to the cell membrane. This is an uncharacterized protein from Methanocaldococcus jannaschii (strain ATCC 43067 / DSM 2661 / JAL-1 / JCM 10045 / NBRC 100440) (Methanococcus jannaschii).